Here is a 216-residue protein sequence, read N- to C-terminus: Thiosulfate dehydrogenase electron acceptor (216 aa).

An N-terminal signal peptide occupies residues 1 to 22 (MKSIHWPLAGVAALLLSMQAQA). 2 Cytochrome c domains span residues 23 to 108 (ADGQ…EAMP) and 118 to 210 (SEAA…ANVG). The heme c site is built by cysteine 41, cysteine 44, histidine 45, cysteine 141, cysteine 144, and histidine 145.

Post-translationally, binds 2 heme c groups covalently per subunit.

In terms of biological role, acts as an electron acceptor for the thiosulfate dehydrogenase TsdA. In Stutzerimonas stutzeri (strain A1501) (Pseudomonas stutzeri), this protein is Thiosulfate dehydrogenase electron acceptor (tsdB).